The sequence spans 196 residues: Protein LSM12 homolog A (196 aa).

Positions 3–73 constitute a Sm domain; it reads APGPGEYFSV…VSEVDIINDR (71 aa). Positions 81 to 175 constitute an AD domain; the sequence is ASLNISKLAN…IVEKHFRDVE (95 aa). Positions 174–196 are disordered; it reads VESQKTMQRSQAQQTQKDSSLSS. Over residues 177–196 the composition is skewed to polar residues; sequence QKTMQRSQAQQTQKDSSLSS.

This sequence belongs to the LSM12 family.

This chain is Protein LSM12 homolog A (lsm12a), found in Danio rerio (Zebrafish).